A 191-amino-acid polypeptide reads, in one-letter code: Orotate phosphoribosyltransferase (191 aa).

5-phospho-alpha-D-ribose 1-diphosphate is bound at residue 114–122 (EDVVTTGKS). Residues Thr-118 and Arg-146 each contribute to the orotate site.

It belongs to the purine/pyrimidine phosphoribosyltransferase family. PyrE subfamily. Homodimer. Requires Mg(2+) as cofactor.

It carries out the reaction orotidine 5'-phosphate + diphosphate = orotate + 5-phospho-alpha-D-ribose 1-diphosphate. It participates in pyrimidine metabolism; UMP biosynthesis via de novo pathway; UMP from orotate: step 1/2. In terms of biological role, catalyzes the transfer of a ribosyl phosphate group from 5-phosphoribose 1-diphosphate to orotate, leading to the formation of orotidine monophosphate (OMP). The protein is Orotate phosphoribosyltransferase of Clostridium botulinum (strain ATCC 19397 / Type A).